The primary structure comprises 1415 residues: DNA-directed RNA polymerase subunit beta' (1415 aa).

Positions 70, 72, 85, and 88 each coordinate Zn(2+). The Mg(2+) site is built by D461, D463, and D465. Positions 820, 894, 901, and 904 each coordinate Zn(2+). The tract at residues 1382–1415 is disordered; the sequence is ERERAQAIADEEQSLFIEPPPVVQATTEGEGDNA.

The protein belongs to the RNA polymerase beta' chain family. In terms of assembly, the RNAP catalytic core consists of 2 alpha, 1 beta, 1 beta' and 1 omega subunit. When a sigma factor is associated with the core the holoenzyme is formed, which can initiate transcription. The cofactor is Mg(2+). Zn(2+) serves as cofactor.

The enzyme catalyses RNA(n) + a ribonucleoside 5'-triphosphate = RNA(n+1) + diphosphate. DNA-dependent RNA polymerase catalyzes the transcription of DNA into RNA using the four ribonucleoside triphosphates as substrates. The sequence is that of DNA-directed RNA polymerase subunit beta' from Cupriavidus pinatubonensis (strain JMP 134 / LMG 1197) (Cupriavidus necator (strain JMP 134)).